We begin with the raw amino-acid sequence, 194 residues long: Thioredoxin peroxidase (194 aa).

The 159-residue stretch at 2 to 160 (LQPNMPAPNF…ALRLLDAFIF (159 aa)) folds into the Thioredoxin domain. Residue Cys47 is the Cysteine sulfenic acid (-SOH) intermediate of the active site.

It belongs to the peroxiredoxin family. AhpC/Prx1 subfamily. In terms of assembly, homodimer; disulfide-linked, upon oxidation.

The catalysed reaction is a hydroperoxide + [thioredoxin]-dithiol = an alcohol + [thioredoxin]-disulfide + H2O. Antioxidant. Could be involved in protection against reactive oxygen species (ROS) generated by metabolic processes and/or protection of the parasite against ROS released by immune effector cells. Its function is as follows. Thiol-specific peroxidase that catalyzes the reduction of hydrogen peroxide and organic hydroperoxides to water and alcohols, respectively. Plays a role in cell protection against oxidative stress by detoxifying peroxides and as sensor of hydrogen peroxide-mediated signaling events. The protein is Thioredoxin peroxidase of Fasciola hepatica (Liver fluke).